The sequence spans 291 residues: Homeobox protein SIX2 (291 aa).

Positions 124–183 (GEETSYCFKEKSRSVLREWYAHNPYPSPREKRELAEATGLTTTQVSNWFKNRRQRDRAAE) form a DNA-binding region, homeobox. The interval 168–279 (VSNWFKNRRQ…HHHGLQDSIL (112 aa)) is disordered. A compositionally biased stretch (basic and acidic residues) spans 179–190 (DRAAEAKERENN). Over residues 224–233 (HSSSSPALLL) the composition is skewed to low complexity. The span at 249–259 (PPGPSAVPVPV) shows a compositional bias: pro residues.

Belongs to the SIX/Sine oculis homeobox family. In terms of assembly, interacts with TCF7L2; in a canonical Wnt signaling independent manner; prevents transcription of differentiation genes in cap mesenchyme. Interacts with OSR1; form a strong repressor complex with TCF7L2, TLE2 and TLE3 to prevent the activation of Wnt/beta-catenin target genes in the cap mesenchyme. Interacts with HOXA11, EYA1 and EYA3. As to expression, strongly expressed in skeletal muscle. Expressed in Wilms' tumor and in the cap mesenchyme of fetal kidney (at protein level).

It is found in the nucleus. In terms of biological role, transcription factor that plays an important role in the development of several organs, including kidney, skull and stomach. During kidney development, maintains cap mesenchyme multipotent nephron progenitor cells in an undifferentiated state by opposing the inductive signals emanating from the ureteric bud and cooperates with WNT9B to promote renewing progenitor cells proliferation. Acts through its interaction with TCF7L2 and OSR1 in a canonical Wnt signaling independent manner preventing transcription of differentiation genes in cap mesenchyme such as WNT4. Also acts independently of OSR1 to activate expression of many cap mesenchyme genes, including itself, GDNF and OSR1. During craniofacial development plays a role in growth and elongation of the cranial base through regulation of chondrocyte differentiation. During stomach organogenesis, controls pyloric sphincter formation and mucosal growth through regulation of a gene network including NKX2-5, BMPR1B, BMP4, SOX9 and GREM1. During branchial arch development, acts to mediate HOXA2 control over the insulin-like growth factor pathway. May also be involved in limb tendon and ligament development. Plays a role in cell proliferation and migration. The protein is Homeobox protein SIX2 (SIX2) of Homo sapiens (Human).